The primary structure comprises 452 residues: MKKKVYTFGLASILGTASLFTPFMNNTASAETSQQKQEIQQKRSEVNSGIESKRKEIAKLQDEQKKLEGKIQELDKKALETSNKIEDKEKENKKTKKEVEALKKEIKETEKRIEERSKVIKNRVRSLQENGGSQNYLNVLLGAQSFGDFITRATAVSTIVDADKDLLDEQEKDKNKLEKAMSDLNTKLDEIQKTLADLKTLKSDLDKQLKEQANLSKQLQTKQAAAESELSDLKKEAGSLTKEEAALEQKLKEERAAAAAAAKAKEESATAEKSDSGSSSSSNSGSVSKSDGSSNSGSSSSKKSSSPSRNYSSGSVVSSNGNAIEAAISTGSSIVGRSPYKWGGGRSQADIDNRRFDCSSFVRWAYASAGVELGFGATTSTLVGKGRAVSASEMKRGDLVFFDTYKTNGHVGIYLGNGTFLNDNSSRGVSVDSMSNPYWKKAFNGVVRRVVE.

A signal peptide spans 1-30; that stretch reads MKKKVYTFGLASILGTASLFTPFMNNTASA. Over residues 28-38 the composition is skewed to polar residues; sequence ASAETSQQKQE. Disordered regions lie at residues 28–53 and 258–317; these read ASAE…IESK and AAAA…GSVV. 2 stretches are compositionally biased toward basic and acidic residues: residues 39-53 and 263-275; these read IQQK…IESK and KAKE…EKSD. The segment covering 276 to 317 has biased composition (low complexity); it reads SGSSSSSNSGSVSKSDGSSNSGSSSSKKSSSPSRNYSSGSVV. Residues 321 to 450 enclose the NlpC/P60 domain; sequence GNAIEAAIST…KAFNGVVRRV (130 aa). Cys-358 functions as the Nucleophile in the catalytic mechanism. The active-site Proton acceptor is the His-410. Asn-422 is an active-site residue.

The protein belongs to the peptidase C40 family.

The protein localises to the secreted. In terms of biological role, shows a cell wall hydrolytic DL-endopeptidase activity. The sequence is that of Peptidoglycan DL-endopeptidase CwlO (cwlO) from Bacillus licheniformis (strain ATCC 14580 / DSM 13 / JCM 2505 / CCUG 7422 / NBRC 12200 / NCIMB 9375 / NCTC 10341 / NRRL NRS-1264 / Gibson 46).